Consider the following 314-residue polypeptide: MAKGIMLHEVGEQVDQYLLIKSSTKGIASNGKPFLTLMLQDQSGDIEAKLWDAKQSDEVTYAPQTIVKVVGDVHHYRGRTQLKLRNIRPVSEQENVNIDDFLETAPIPKNEMMDTITQYIFEMKNPNIQRITRFLVKKHEAEFMDYPAATKNHHEFVSGLAYHVVSMLNLAKAIADLYPSLDRDLLYAGVILHDLGKVKELSGPVSTSYTVEGNLLGHISIMVTELSKAAEELQIDSEEVLILQHLILSHHGKAEWGSPKPPMVKEAEILHYIDNLDAKMNMMDRALERVKPGEYTERVFALENRSFYKPTFHK.

A DNA-binding region (OB) is located at residues 22–90; it reads SSTKGIASNG…QLKLRNIRPV (69 aa). The 117-residue stretch at 163 to 279 folds into the HD domain; the sequence is HVVSMLNLAK…LHYIDNLDAK (117 aa).

This sequence belongs to the YhaM family. Mn(2+) serves as cofactor. It depends on Co(2+) as a cofactor.

Its function is as follows. Shows a 3'-5' exoribonuclease activity as well as single-stranded DNA 3'-5'exonuclease activity. Plays a role in the secondary pathway of 23S rRNA 3' end maturation. The chain is 3'-5' exoribonuclease YhaM from Bacillus subtilis (strain 168).